An 876-amino-acid polypeptide reads, in one-letter code: Probable inactive ATP-dependent zinc metalloprotease FTSHI 2, chloroplastic (876 aa).

The tract at residues 1 to 20 is disordered; it reads MACRFPLHSSSPSQFLSPEN. A chloroplast-targeting transit peptide spans 1–32; that stretch reads MACRFPLHSSSPSQFLSPENRQRLPRNYPSIS. Polar residues predominate over residues 8 to 19; it reads HSSSPSQFLSPE. The helical transmembrane segment at 59–79 threads the bilayer; that stretch reads LLAIPITLTIISASLAKPSFA. The tract at residues 256 to 276 is disordered; the sequence is TMKAQKKQQERKKRKAVRKKK. Over residues 258-275 the composition is skewed to basic residues; the sequence is KAQKKQQERKKRKAVRKK. A helical membrane pass occupies residues 304-324; it reads VATALGLVFFYIFYRVVVLNY. Residues 350–370 form a disordered region; it reads ELEREMEGIEEEDEEVEEGTG. Residues 357-368 are compositionally biased toward acidic residues; sequence GIEEEDEEVEEG. 450 to 457 serves as a coordination point for ATP; the sequence is GPPGVGKT.

In the N-terminal section; belongs to the AAA ATPase family. The protein in the C-terminal section; belongs to the peptidase M41 family. In terms of assembly, homooligomer. Interacts with FtsHi4.

Its subcellular location is the plastid. The protein localises to the chloroplast membrane. Functionally, required for plastid development during embryogenesis. Might be involved in chaperone functions or play a structural role in the thylakoid FtsH complex. In Arabidopsis thaliana (Mouse-ear cress), this protein is Probable inactive ATP-dependent zinc metalloprotease FTSHI 2, chloroplastic.